The sequence spans 288 residues: Diaminopimelate epimerase (288 aa).

3 residues coordinate substrate: Asn-13, Gln-46, and Asn-66. Cys-75 acts as the Proton donor in catalysis. Residues 76–77 (GN), Asn-166, Asn-199, and 217–218 (ER) contribute to the substrate site. The active-site Proton acceptor is the Cys-226. 227–228 (GT) serves as a coordination point for substrate.

Belongs to the diaminopimelate epimerase family. In terms of assembly, homodimer.

Its subcellular location is the cytoplasm. It carries out the reaction (2S,6S)-2,6-diaminopimelate = meso-2,6-diaminopimelate. It functions in the pathway amino-acid biosynthesis; L-lysine biosynthesis via DAP pathway; DL-2,6-diaminopimelate from LL-2,6-diaminopimelate: step 1/1. Catalyzes the stereoinversion of LL-2,6-diaminopimelate (L,L-DAP) to meso-diaminopimelate (meso-DAP), a precursor of L-lysine and an essential component of the bacterial peptidoglycan. The polypeptide is Diaminopimelate epimerase (Cupriavidus taiwanensis (strain DSM 17343 / BCRC 17206 / CCUG 44338 / CIP 107171 / LMG 19424 / R1) (Ralstonia taiwanensis (strain LMG 19424))).